Here is an 895-residue protein sequence, read N- to C-terminus: MTTLDHVIATHQSEWVSFSEEPLFPTPLEGGTEEHFPGLSSSSDRSESSSGENHAVDEGSQDLSHSEQDDSSEKMGLISEAASPPGSPVQPTPDLASAISNWVQFEDDTPWSNTSAPHKETALTLTVPCWTCPSLDSLRRCPLASESSWTTHSEDTSSPSVAPSYTDLQLINAEEQASGRASGTDSTDNSSSLQEDEEVEMETISWWAGSPAMNGHPAVPQVTTARFPSWVTFEDNEVGCPSPTVPSPKKPNAPSAATAGPDVPFNSTGSFKRDRPKSTLMNLSKVQKLDISSLNRPPSVTEAPPWRATNPFLNESLQDIQPSPINPFSAFFEEQERRSQNSSISGTSGKSQRDSLIVIYQDAISFDDSGKSQSHPDAIEKLKQLQIDDPDPVGNAALPDDDPTASVEPDAPSPTSALSQPRDGWPMMLRIPEKKNIMSSRHWGPIYIKLTDSGYLQLYYEQGLEKPFREFKLEICHEVSEPRLQNYDENGRIHSLRIDRVTYKEKKKYQPKPAVAHAAEREQVIKLGTTNYDDFLSFIHAVQDRLMDLPVQSMDLSTVGLNYLEEEITVDIRDEFSGTVSKGDNQILQHHVLTRIHILSFLSGLAECRLGLNDILIKGNEIVSRQDIMPTTTTKWIKLHECRFHGCVDEDVFNSSRVILFNPLDACRFELMRFRTVFAEKTLPFTLRTAASINGAEVEVQSWLRMSPGFSSNRDPLTQVPCENVMVRYPVPSEWVKNFRRESVLGEKSLKAKVNRGASFGSAGASGSEPVMRVTLGTAKYEHAFNSIVWRINRLPDKNSASGHPHCFFCHLELGSDREVPSRFANHVNVEFSMPTTSASKAAVRSISVEDKPDVRKWVNYSAHYSYKVEIEQKKSLKPDFEGEDLENPKECGVQ.

Disordered stretches follow at residues 10-101 (THQS…AISN), 144-204 (ASES…METI), and 236-279 (NEVG…PKST). A compositionally biased stretch (basic and acidic residues) spans 64–73 (SHSEQDDSSE). Composition is skewed to polar residues over residues 145–169 (SESS…TDLQ) and 179–193 (GRAS…SSSL). Phosphoserine is present on residues S278, S284, and S299. 2 disordered regions span residues 291–326 (ISSL…SPIN) and 386–424 (QIDD…PRDG). 2 consecutive short sequence motifs (NPF) follow at residues 310 to 312 (NPF) and 326 to 328 (NPF). The span at 311–323 (PFLNESLQDIQPS) shows a compositional bias: polar residues. Residues 424–557 (GWPMMLRIPE…DLPVQSMDLS (134 aa)) form the SHD domain. The MHD domain maps to 565–872 (EEEITVDIRD…AHYSYKVEIE (308 aa)). A Phosphoserine modification is found at S759.

It belongs to the Stoned B family. Interacts with the second C2 domain of synaptotagmins SYT1 and SYT2. Interacts with EPS15, EPS15R and ITSN1. Interacts indirectly with the AP-2 adapter complex. Interacts with TOR1A and COPS4; the interaction controls STON2 protein stability. In terms of processing, phosphorylated in vitro by PKD. Neddylated and ubiquitinated; leading to its degradation and inhibited by TOR1A and COPS4.

Its subcellular location is the synapse. The protein localises to the synaptosome. It is found in the cytoplasm. It localises to the membrane. Its function is as follows. Adapter protein involved in endocytic machinery. Involved in the synaptic vesicle recycling. May facilitate clathrin-coated vesicle uncoating. The chain is Stonin-2 (Ston2) from Rattus norvegicus (Rat).